A 305-amino-acid chain; its full sequence is Protoheme IX farnesyltransferase (305 aa).

9 consecutive transmembrane segments (helical) span residues 29 to 49, 55 to 75, 101 to 121, 123 to 143, 151 to 171, 177 to 197, 219 to 241, 246 to 268, and 283 to 303; these read LIVFCAAIGMLLAVPGAPGLA, LWATLGIWLVASAAAAFNCLI, ALIFSAVLCSAGMAVLHEAVN, LTAWLTLGTFVGYAVIYTVVL, IVIGGISGAMPPLLGWAAMTG, GLILCLIIFLWTPPHFWALAL, FTRLQILLYTFVLLAGTLLPFVQ, WLYLAAAFVLGLRFIHYAWRLWR, and IWHLSLLFAALLVDHYTQDLL.

Belongs to the UbiA prenyltransferase family. Protoheme IX farnesyltransferase subfamily.

It localises to the cell inner membrane. It carries out the reaction heme b + (2E,6E)-farnesyl diphosphate + H2O = Fe(II)-heme o + diphosphate. It functions in the pathway porphyrin-containing compound metabolism; heme O biosynthesis; heme O from protoheme: step 1/1. Converts heme B (protoheme IX) to heme O by substitution of the vinyl group on carbon 2 of heme B porphyrin ring with a hydroxyethyl farnesyl side group. In Leptothrix cholodnii (strain ATCC 51168 / LMG 8142 / SP-6) (Leptothrix discophora (strain SP-6)), this protein is Protoheme IX farnesyltransferase.